A 213-amino-acid chain; its full sequence is Large ribosomal subunit protein uL1 (213 aa).

The protein belongs to the universal ribosomal protein uL1 family. In terms of assembly, part of the 50S ribosomal subunit.

Functionally, binds directly to 23S rRNA. Probably involved in E site tRNA release. Its function is as follows. Protein L1 is also a translational repressor protein, it controls the translation of its operon by binding to its mRNA. This is Large ribosomal subunit protein uL1 from Methanococcus maripaludis (strain C5 / ATCC BAA-1333).